The chain runs to 398 residues: Lysophosphatidylserine lipase ABHD12 (398 aa).

Topologically, residues 1–74 (MRKRTEPVAL…RKGLWLRLRK (74 aa)) are cytoplasmic. Residues 75–95 (ILFCVLGLYIAIPFLIKLCPG) form a helical membrane-spanning segment. The Extracellular portion of the chain corresponds to 96 to 398 (IQAKLIFLNF…LGKSEPEHQH (303 aa)). Residue asparagine 123 is glycosylated (N-linked (GlcNAc...) asparagine). Serine 246 serves as the catalytic Nucleophile. Residues aspartate 333 and histidine 372 each act as charge relay system in the active site.

Belongs to the serine esterase family.

It is found in the endoplasmic reticulum membrane. The enzyme catalyses 1-(9Z-octadecenoyl)-sn-glycero-3-phospho-L-serine + H2O = sn-glycero-3-phospho-L-serine + (9Z)-octadecenoate + H(+). It catalyses the reaction 1-(9Z-octadecenoyl)-sn-glycero-3-phospho-(1'-sn-glycerol) + H2O = sn-glycero-3-phospho-(1'-sn-glycerol) + (9Z)-octadecenoate + H(+). The catalysed reaction is 1-(9Z-octadecenoyl)-sn-glycero-3-phospho-(1D-myo-inositol) + H2O = sn-glycero-3-phospho-1D-myo-inositol + (9Z)-octadecenoate + H(+). It carries out the reaction 1-(9Z-octadecenoyl)-sn-glycero-3-phosphoethanolamine + H2O = sn-glycero-3-phosphoethanolamine + (9Z)-octadecenoate + H(+). The enzyme catalyses 1-(9Z-octadecenoyl)-sn-glycero-3-phosphocholine + H2O = 1-(9Z-octadecenoyl)-sn-glycerol + phosphocholine + H(+). It catalyses the reaction 2-(9Z-octadecenoyl)-glycerol + H2O = glycerol + (9Z)-octadecenoate + H(+). The catalysed reaction is 1-hexadecanoyl-sn-glycero-3-phospho-L-serine + H2O = sn-glycero-3-phospho-L-serine + hexadecanoate + H(+). It carries out the reaction 2-(5Z,8Z,11Z,14Z-eicosatetraenoyl)-glycerol + H2O = glycerol + (5Z,8Z,11Z,14Z)-eicosatetraenoate + H(+). The enzyme catalyses Hydrolyzes glycerol monoesters of long-chain fatty acids.. It catalyses the reaction 1-decanoylglycerol + H2O = decanoate + glycerol + H(+). The catalysed reaction is 1-dodecanoylglycerol + H2O = dodecanoate + glycerol + H(+). It carries out the reaction 1-tetradecanoylglycerol + H2O = tetradecanoate + glycerol + H(+). The enzyme catalyses 2-hexadecanoylglycerol + H2O = glycerol + hexadecanoate + H(+). It catalyses the reaction 1-(9Z-octadecenoyl)-glycerol + H2O = glycerol + (9Z)-octadecenoate + H(+). The catalysed reaction is 2-(9Z,12Z-octadecadienoyl)-glycerol + H2O = (9Z,12Z)-octadecadienoate + glycerol + H(+). It carries out the reaction 1-(5Z,8Z,11Z,14Z-eicosatetraenoyl)-glycerol + H2O = glycerol + (5Z,8Z,11Z,14Z)-eicosatetraenoate + H(+). The enzyme catalyses 1-(9Z,12Z-octadecadienoyl)-glycerol + H2O = (9Z,12Z)-octadecadienoate + glycerol + H(+). It catalyses the reaction 1-hexadecanoylglycerol + H2O = glycerol + hexadecanoate + H(+). The catalysed reaction is 1-octadecanoylglycerol + H2O = octadecanoate + glycerol + H(+). It carries out the reaction 1-octadecanoyl-2-(9,10-epoxyoctadecanoyl)-sn-glycero-3-phospho-L-serine + H2O = 9,10-epoxyoctadecanoate + 1-octadecanoyl-sn-glycero-3-phosphoserine + H(+). The enzyme catalyses 1-octadecanoyl-2-(10-hydroxyoctadecanoyl)-sn-glycero-3-phospho-L-serine + H2O = 1-octadecanoyl-sn-glycero-3-phosphoserine + 10-hydroxyoctadecanoate + H(+). It catalyses the reaction 1-hexadecanoyl-2-(10-hydroxyoctadecanoyl)-sn-glycero-3-phospho-L-serine + H2O = 10-hydroxyoctadecanoate + 1-hexadecanoyl-sn-glycero-3-phospho-L-serine + H(+). Functionally, lysophosphatidylserine (LPS) lipase that mediates the hydrolysis of lysophosphatidylserine, a class of signaling lipids that regulates immunological and neurological processes. Represents a major lysophosphatidylserine lipase in the brain, thereby playing a key role in the central nervous system. Also able to hydrolyze oxidized phosphatidylserine; oxidized phosphatidylserine is produced in response to severe inflammatory stress and constitutes a proapoptotic 'eat me' signal. Also has monoacylglycerol (MAG) lipase activity: hydrolyzes 2-arachidonoylglycerol (2-AG), thereby acting as a regulator of endocannabinoid signaling pathways. Has a strong preference for very-long-chain lipid substrates; substrate specificity is likely due to improved catalysis and not improved substrate binding. In Macaca fascicularis (Crab-eating macaque), this protein is Lysophosphatidylserine lipase ABHD12.